The primary structure comprises 118 residues: Holo-[acyl-carrier-protein] synthase (118 aa).

D9 and E52 together coordinate Mg(2+).

This sequence belongs to the P-Pant transferase superfamily. AcpS family. Mg(2+) serves as cofactor.

The protein resides in the cytoplasm. The enzyme catalyses apo-[ACP] + CoA = holo-[ACP] + adenosine 3',5'-bisphosphate + H(+). Transfers the 4'-phosphopantetheine moiety from coenzyme A to a Ser of acyl-carrier-protein. The sequence is that of Holo-[acyl-carrier-protein] synthase from Frankia alni (strain DSM 45986 / CECT 9034 / ACN14a).